Reading from the N-terminus, the 95-residue chain is Alpha-bungarotoxin isoform V31 (95 aa).

The signal sequence occupies residues 1-21 (MKTLLLTLVVVTIVCLDLGYT). Disulfide bonds link Cys-24/Cys-44, Cys-37/Cys-65, Cys-50/Cys-54, Cys-69/Cys-80, and Cys-81/Cys-86.

It belongs to the three-finger toxin family. Long-chain subfamily. Type II alpha-neurotoxin sub-subfamily. In terms of assembly, monomer in solution, homodimer in crystal state. As to expression, expressed by the venom gland.

It localises to the secreted. In terms of biological role, binds with high affinity to muscular (alpha-1/CHRNA1) and neuronal (alpha-7/CHRNA7) nicotinic acetylcholine receptor (nAChR) and inhibits acetylcholine from binding to the receptor, thereby impairing neuromuscular and neuronal transmission. This chain is Alpha-bungarotoxin isoform V31, found in Bungarus multicinctus (Many-banded krait).